The primary structure comprises 161 residues: Ribonuclease H (161 aa).

An RNase H type-1 domain is found at 2 to 141 (TNNEIIAATD…ADSLARQAAN (140 aa)). Residues Asp11, Glu46, Asp69, and Asp133 each contribute to the Mg(2+) site.

This sequence belongs to the RNase H family. In terms of assembly, monomer. Mg(2+) serves as cofactor.

The protein resides in the cytoplasm. It catalyses the reaction Endonucleolytic cleavage to 5'-phosphomonoester.. In terms of biological role, endonuclease that specifically degrades the RNA of RNA-DNA hybrids. This Tropheryma whipplei (strain TW08/27) (Whipple's bacillus) protein is Ribonuclease H.